Reading from the N-terminus, the 357-residue chain is CD4+ T-cell-stimulating antigen (357 aa).

Residues 1–22 form the signal peptide; it reads MKKRTFALALSMIIASGVVLGA. Cysteine 23 carries N-palmitoyl cysteine lipidation. Cysteine 23 carries S-diacylglycerol cysteine lipidation.

The protein belongs to the BMP lipoprotein family.

The protein localises to the cell membrane. The sequence is that of CD4+ T-cell-stimulating antigen (tcsA) from Listeria innocua serovar 6a (strain ATCC BAA-680 / CLIP 11262).